We begin with the raw amino-acid sequence, 387 residues long: GTPase Obg (387 aa).

Residues 1 to 159 (MKFVDEVEIR…RSLKLELLLL (159 aa)) enclose the Obg domain. Residues 160–333 (ADVGLLGLPN…LTQKVMTFIE (174 aa)) form the OBG-type G domain. GTP-binding positions include 166–173 (GLPNAGKS), 191–195 (FTTLV), 213–216 (DIPG), 283–286 (NKLD), and 314–316 (SAF). Mg(2+) contacts are provided by Ser-173 and Thr-193. Residues 361–387 (AAHSQDDDLDDDDWDEDDYDVEVEYRQ) are disordered. The segment covering 367–387 (DDLDDDDWDEDDYDVEVEYRQ) has biased composition (acidic residues).

It belongs to the TRAFAC class OBG-HflX-like GTPase superfamily. OBG GTPase family. As to quaternary structure, monomer. The cofactor is Mg(2+).

The protein resides in the cytoplasm. An essential GTPase which binds GTP, GDP and possibly (p)ppGpp with moderate affinity, with high nucleotide exchange rates and a fairly low GTP hydrolysis rate. Plays a role in control of the cell cycle, stress response, ribosome biogenesis and in those bacteria that undergo differentiation, in morphogenesis control. In Colwellia psychrerythraea (strain 34H / ATCC BAA-681) (Vibrio psychroerythus), this protein is GTPase Obg.